Consider the following 2110-residue polypeptide: Protein Ycf2 (2110 aa).

The segment at 190-209 (DSSQLKGSSDQSRDPLDSIS) is disordered. 1442–1449 (GSIGTGRS) is an ATP binding site.

It belongs to the Ycf2 family.

It localises to the plastid. It is found in the chloroplast stroma. Functionally, probable ATPase of unknown function. Its presence in a non-photosynthetic plant (Epifagus virginiana) and experiments in tobacco indicate that it has an essential function which is probably not related to photosynthesis. The protein is Protein Ycf2 of Panax ginseng (Korean ginseng).